The sequence spans 1150 residues: RNA polymerase-associated protein CTR9 (1150 aa).

TPR repeat units lie at residues 143–176 (VRAW…NPKN), 177–210 (VLPL…CRHT), 212–245 (ADLR…EPYN), 247–282 (SAMC…QTDH), 320–353 (AEAF…NNGE), 355–388 (TLAH…LPNN), 432–464 (YEAC…LVTN), 471–504 (PEML…LEEQ), 594–627 (PIVW…IFNN), 643–677 (FEQL…QPKN), 679–711 (YAAN…TSEF), 712–745 (YDVW…FRKE), and 748–781 (STLQ…QLDN). Coiled coils occupy residues 848 to 916 (AEEA…NLRL) and 972 to 1028 (ERRE…AKQS). The disordered stretch occupies residues 935–1150 (KRRGGGGRKR…KKKVIESDSD (216 aa)). Residues 975-992 (ERRKKDKAAKKASRKKRE) show a composition bias toward basic residues. Composition is skewed to basic and acidic residues over residues 993 to 1005 (RRDS…NRRD), 1013 to 1024 (EERDRKLQEKLS), 1060 to 1084 (DPRP…ETTT), and 1132 to 1150 (RDSD…SDSD).

Component of the PAF1 complex which consists of at least cdc-73, ctr-9, leo-1, pafo-1 and rtfo-1.

The protein localises to the nucleus. In terms of biological role, component of the PAF1 complex which is a multifunctional complex involved in transcription initiation via genetic interactions with TATA-binding proteins, elongation and transcription-coupled histone modification. Ctr-9 is required for epidermal microtubule organization during morphogenesis. The polypeptide is RNA polymerase-associated protein CTR9 (Caenorhabditis elegans).